The primary structure comprises 238 residues: Uridylate kinase (238 aa).

12 to 15 (KLSG) contacts ATP. G54 is a UMP binding site. ATP-binding residues include G55 and R59. Residues D74 and 135–142 (TGNPFFTT) each bind UMP. Positions 162, 163, 168, and 171 each coordinate ATP.

Belongs to the UMP kinase family. Homohexamer.

Its subcellular location is the cytoplasm. It carries out the reaction UMP + ATP = UDP + ADP. The protein operates within pyrimidine metabolism; CTP biosynthesis via de novo pathway; UDP from UMP (UMPK route): step 1/1. Its activity is regulated as follows. Inhibited by UTP. Catalyzes the reversible phosphorylation of UMP to UDP. In Rhodopseudomonas palustris (strain HaA2), this protein is Uridylate kinase.